A 1007-amino-acid chain; its full sequence is MKLSSACAIALLAAQAAGASIKHRINGFTLTEHSDPAKRELLQKYVTWDDKSLFINGERIMIFSGEFHPFRLPVKELQLDIFQKVKALGFNCVSFYVDWALVEGEPGEYRADGIFDLEPFFDAASEAGIYLLARPGPYINAESSGGGFPGWLQRVNGTLRSSDKAYLDATDNYVSHVAATIAKYQITNGGPIILYQPENEYTSGCCGVEFPDPVYMQYVEDQARNAGVVIPLINNDASASGNNAPGTGKGAVDIYGHDSYPLGFDCANPTVWPSGDLPTNFRTLHLEQSPTTPYAIVEFQGGSYDPWGGPGFAACSELLNNEFERVSYKNDFSFQIAIMNLYMIFGGTNWGNLGYPNGYTSYDYGSAVTESRNITREKYSELKLLGNFAKVSPGYLTASPGNLTTSGYADTTDLTVTPLLGNSTGSFFVVRHSDYSSEESTSYKLRLPTSASSVTIPQLGGTLTLNGRDSKIHVTDYNVSGTNIIYSTAEVFTWKKFADGKVLVLYGGAGEHHELAISTKSNVTVIEGSESGISSKQTSSSVVVGWDVSTTRRIIQVGDLKILLLDRNSAYNYWVPQLATDGTSPGFSTPEKVASSIIVKAGYLVRTAYLKGSGLYLTADFNATTSVEVIGVPSTAKNLFINGDKTSHTVDKNGIWSATVDYNAPDISLPSLKDLDWKYVDTLPEIQSSYDDSLWPAADLKQTKNTLRSLTTPTSLYSSDYGFHTGYLLYRGHFTATGNESTFAIDTQGGSAFGSSVWLNGTYLGSWTGLYANSDYNATYNLPQLQAGKTYVITVVINNMGLEENWTVGEDLMKTPRGILNFLLAGRPSSAISWKLTGNLGGEDYEDKVRGPLNEGGLYAERQGFHQPEPPSQDWKSSSPLEGLSEAGIGFYSASFDLDLPKGWDVPLFLNIGNSTTPSPYRVQVYVNGYQYAKYISNIGPQTSFPVPEGILNYRGTNWLAVTLWALDSAGGKLESLELSYTTPVLTALGEVESVDQPKYKKRKGAY.

A signal peptide spans 1–18 (MKLSSACAIALLAAQAAG). Substrate-binding residues include Y96, N140, A141, and E142. An N-linked (GlcNAc...) asparagine glycan is attached at N156. Residue N199 participates in substrate binding. The Proton donor role is filled by E200. The cysteines at positions 205 and 206 are disulfide-linked. Substrate is bound at residue Y260. C266 and C315 are oxidised to a cystine. The active-site Nucleophile is E298. Y364 contacts substrate. N373, N402, N422, N478, N522, N622, N739, N760, N777, and N805 each carry an N-linked (GlcNAc...) asparagine glycan. The segment at 862-881 (RQGFHQPEPPSQDWKSSSPL) is disordered. N914 carries an N-linked (GlcNAc...) asparagine glycan.

Belongs to the glycosyl hydrolase 35 family.

Its subcellular location is the secreted. It catalyses the reaction Hydrolysis of terminal non-reducing beta-D-galactose residues in beta-D-galactosides.. Cleaves beta-linked terminal galactosyl residues from gangliosides, glycoproteins, and glycosaminoglycans. The sequence is that of Probable beta-galactosidase A (lacA) from Aspergillus phoenicis (Aspergillus saitoi).